Here is a 502-residue protein sequence, read N- to C-terminus: Glutamate--tRNA ligase (502 aa).

Positions 12–22 (PSPTGYLHVGG) match the 'HIGH' region motif. The short motif at 259–263 (KLSKR) is the 'KMSKS' region element. K262 contacts ATP.

It belongs to the class-I aminoacyl-tRNA synthetase family. Glutamate--tRNA ligase type 1 subfamily. In terms of assembly, monomer.

It localises to the cytoplasm. The enzyme catalyses tRNA(Glu) + L-glutamate + ATP = L-glutamyl-tRNA(Glu) + AMP + diphosphate. In terms of biological role, catalyzes the attachment of glutamate to tRNA(Glu) in a two-step reaction: glutamate is first activated by ATP to form Glu-AMP and then transferred to the acceptor end of tRNA(Glu). This is Glutamate--tRNA ligase from Pelodictyon phaeoclathratiforme (strain DSM 5477 / BU-1).